We begin with the raw amino-acid sequence, 1062 residues long: SLIT-ROBO Rho GTPase-activating protein 1 (1062 aa).

An F-BAR domain is found at 19–314; it reads SQVKEIRAQL…AVDNLEPRSD (296 aa). Positions 352 to 382 form a coiled coil; it reads QAELMLRNQQLQSRLATLKIESEEVKKTTEA. Ser416 carries the phosphoserine modification. The region spanning 481-671 is the Rho-GAP domain; it reads GRRNSHARHQ…TIIIHHETIF (191 aa). Residues 720–779 form the SH3 domain; sequence CEPIEAIAKFDYVGRSARELSFKKGASLLLYHRASEDWWEGRHNGIDGLVPHQYIVVQDM. The span at 785–799 shows a compositional bias: polar residues; it reads DTLSQKADSEASSGP. The interval 785-931 is disordered; that stretch reads DTLSQKADSE…TGFNDHKPLD (147 aa). Phosphoserine is present on residues Ser812 and Ser894. The segment covering 899 to 908 has biased composition (basic and acidic residues); the sequence is SRHDSLKKID. A Phosphoserine modification is found at Ser909. Polar residues predominate over residues 914–923; sequence RSTSSGQYTG. Positions 933–960 form a coiled coil; the sequence is ETIAQDIEETMNTALNELRELERQSTVK. Over residues 974–988 the composition is skewed to polar residues; the sequence is KNSPTPATSTESLSP. Disordered stretches follow at residues 974-1013 and 1028-1062; these read KNSP…ETMS and KPPA…SCTM. Phosphoserine is present on Ser976. At Thr978 the chain carries Phosphothreonine. Residues 1004-1013 are compositionally biased toward low complexity; it reads STSSSSETMS. Ser1009 bears the Phosphoserine mark. The span at 1053–1062 shows a compositional bias: polar residues; it reads QGPTDKSCTM.

In terms of assembly, homodimer. Forms a heterooligomer with SRGAP2 and SRGAP3 through its F-BAR domain. Interacts with CDC42 and RHOA. Interacts with FASLG. Interacts (via SH3 domain) with ROBO1.

Its function is as follows. GTPase-activating protein for RhoA and Cdc42 small GTPases. Together with CDC42 seems to be involved in the pathway mediating the repulsive signaling of Robo and Slit proteins in neuronal migration. SLIT2, probably through interaction with ROBO1, increases the interaction of SRGAP1 with ROBO1 and inactivates CDC42. This chain is SLIT-ROBO Rho GTPase-activating protein 1 (Srgap1), found in Mus musculus (Mouse).